Here is a 241-residue protein sequence, read N- to C-terminus: Small ribosomal subunit protein eS4 (241 aa).

The region spanning 37 to 99 (IPLGLLLRDY…ADLYLRIVPD (63 aa)) is the S4 RNA-binding domain.

Belongs to the eukaryotic ribosomal protein eS4 family.

The polypeptide is Small ribosomal subunit protein eS4 (Metallosphaera sedula (strain ATCC 51363 / DSM 5348 / JCM 9185 / NBRC 15509 / TH2)).